Consider the following 224-residue polypeptide: Response regulator protein GraR (224 aa).

In terms of domain architecture, Response regulatory spans 2–115; that stretch reads QVLLVEDDQT…VLIAKLQAIY (114 aa). Aspartate 51 is subject to 4-aspartylphosphate. A DNA-binding region (ompR/PhoB-type) is located at residues 126–224; that stretch reads KRTLNWQDAL…KVGKGYMAHE (99 aa).

Phosphorylated by GraS.

The protein localises to the cytoplasm. Functionally, member of the two-component regulatory system GraR/GraS involved in resistance against cationic antimicrobial peptides (CAMPs). The chain is Response regulator protein GraR (graR) from Staphylococcus haemolyticus (strain JCSC1435).